Consider the following 71-residue polypeptide: Permeability factor 2 (71 aa).

2 disulfides stabilise this stretch: C7–C33 and C9–C49.

It belongs to the intercrine alpha (chemokine CxC) family. Homodimer.

The protein localises to the secreted. In terms of biological role, has chemotactic activity for neutrophils. This Oryctolagus cuniculus (Rabbit) protein is Permeability factor 2.